The chain runs to 652 residues: Sodium-dependent phosphate transporter 1-A (652 aa).

Over 1 to 25 (MESTTLASLAAVSVLAAGAQTDMSD) the chain is Cytoplasmic. Residues 26–46 (VLWLLILGFVIAFILAFSVGA) form a helical membrane-spanning segment. The Extracellular segment spans residues 47-66 (NDVANSFGTAVGSGVVTLRQ). A helical transmembrane segment spans residues 67-87 (ACILATIFETVGAMLLGAKVS). The Cytoplasmic portion of the chain corresponds to 88–104 (ETIRSGIIDVHMYNGSE). The helical transmembrane segment at 105–125 (AVLMAGSISAMFGSAVWQLAA) threads the bilayer. Residues 126-162 (SFLKLPISGTHCIVGATIGFSMVARGHQGVKWLELLR) lie on the Extracellular side of the membrane. The chain crosses the membrane as a helical span at residues 163–183 (IVASWFLSPLLSGIMSAVLFY). Residues 184–201 (FVRKFILNKDDPVPNGLR) lie on the Cytoplasmic side of the membrane. A helical transmembrane segment spans residues 202 to 222 (ALPVFYAVTMGINLFSIMFTG). The Extracellular portion of the chain corresponds to 223-234 (APMLGFDRIPWW). The chain crosses the membrane as a helical span at residues 235–255 (GTLLISLGCAILTALVVWFIV). The Cytoplasmic portion of the chain corresponds to 256–482 (CPRLKKKMQS…IDELEIDKPE (227 aa)). Residues 278 to 308 (TQLVEKKPSSNGLMDHHPGPPRNYSPVPQTP) form a disordered region. The span at 281 to 295 (VEKKPSSNGLMDHHP) shows a compositional bias: basic and acidic residues. Pro residues predominate over residues 297-308 (PPRNYSPVPQTP). A helical transmembrane segment spans residues 483-503 (VSTLFQFLQILTACFGSFAHG). Over 504-531 (GNDVSNAIGPLVALWLIYDSASVAPSAP) the chain is Extracellular. A helical transmembrane segment spans residues 532-552 (TPIWLLLYGGVGICTGLWIWG). Topologically, residues 553–571 (RRVIQTMGKDLTPITPSSG) are cytoplasmic. A helical transmembrane segment spans residues 572-592 (FSIELASAITVVVASNIGLPV). Residues 593–621 (STTHCKVGSVVSVGWLRSRKAVDWHLFRN) lie on the Extracellular side of the membrane. The chain crosses the membrane as a helical span at residues 622 to 642 (IFIAWFVTVPISGLISAAIMA). Topologically, residues 643–652 (LFYYVILPLT) are cytoplasmic.

It belongs to the inorganic phosphate transporter (PiT) (TC 2.A.20) family.

It is found in the membrane. Functionally, sodium-phosphate symporter which plays a fundamental housekeeping role in phosphate transport. The protein is Sodium-dependent phosphate transporter 1-A (slc20a1a) of Danio rerio (Zebrafish).